A 469-amino-acid polypeptide reads, in one-letter code: RNA-editing ligase 1, mitochondrial (469 aa).

Residues 1–44 constitute a mitochondrion transit peptide; the sequence is MQLQRLGAPLLKRLVGGCIRQSTAPIMPCVVVSGSGGFLTPVRT. ATP-binding positions include 59-61, 86-92, Asn92, Arg111, Glu159, Phe209, and 307-309; these read IEI, EKVHGTN, and KLR. Lys87 (N6-AMP-lysine intermediate) is an active-site residue. Residues 450 to 469 form a disordered region; it reads AAAQSEAIPPLSPAAPTKGE.

This sequence belongs to the RNA ligase 2 family. As to quaternary structure, component of the RNA editing complex (editosome), a 1600 kDa complex composed of at least 20 proteins. Interacts with terminal uridylyltransferase MEAT1.

Its subcellular location is the mitochondrion. The catalysed reaction is ATP + (ribonucleotide)n-3'-hydroxyl + 5'-phospho-(ribonucleotide)m = (ribonucleotide)n+m + AMP + diphosphate.. Essential for RNA editing. RNA editing in kinetoplastid mitochondria inserts and deletes uridylates at multiple sites in pre-mRNAs as directed by guide RNAs. This is RNA-editing ligase 1, mitochondrial (REL1) from Trypanosoma brucei brucei (strain 927/4 GUTat10.1).